The sequence spans 226 residues: Flagellar L-ring protein (226 aa).

The signal sequence occupies residues 1–15 (MKRLAVSILCLALAG). The N-palmitoyl cysteine moiety is linked to residue Cys-16. The S-diacylglycerol cysteine moiety is linked to residue Cys-16.

The protein belongs to the FlgH family. As to quaternary structure, the basal body constitutes a major portion of the flagellar organelle and consists of four rings (L,P,S, and M) mounted on a central rod.

It is found in the cell outer membrane. Its subcellular location is the bacterial flagellum basal body. Its function is as follows. Assembles around the rod to form the L-ring and probably protects the motor/basal body from shearing forces during rotation. The protein is Flagellar L-ring protein of Geobacter metallireducens (strain ATCC 53774 / DSM 7210 / GS-15).